A 266-amino-acid chain; its full sequence is 2-hydroxyisocaproyl-CoA dehydratase activator (266 aa).

ATP is bound by residues 10-14 and 102-104; these read STASK and GQD. Cys125 is a [4Fe-4S] cluster binding site. An ATP-binding site is contributed by Asp134. A [4Fe-4S] cluster-binding site is contributed by Cys164. 2 residues coordinate ATP: Gly215 and Gln241.

Belongs to the HadI activator family. Homodimer. [4Fe-4S] cluster is required as a cofactor.

Its function is as follows. Involved in the reductive branch of L-leucine fermentation. Required for the activation of (R)-2-hydroxyisocaproyl-CoA dehydratase. The reduced activator transfers one electron to the dehydratase concomitant with hydrolysis of ATP. This protein is extremely sensitive towards oxygen. This is 2-hydroxyisocaproyl-CoA dehydratase activator from Clostridioides difficile (Peptoclostridium difficile).